Here is a 246-residue protein sequence, read N- to C-terminus: Mast cell protease 9 (246 aa).

A signal peptide spans 1 to 18 (MQALLFLMALLLPSRAGA). The propeptide at 19 to 20 (EE) is activation peptide. Positions 21–244 (IIGGVESEPH…HVPWINRVIK (224 aa)) constitute a Peptidase S1 domain. A disulfide bond links Cys50 and Cys66. Active-site charge relay system residues include His65 and Asp109. Cystine bridges form between Cys143/Cys208 and Cys174/Cys187. Catalysis depends on Ser202, which acts as the Charge relay system.

This sequence belongs to the peptidase S1 family. Granzyme subfamily. Selectively expressed in uterine mast cells.

The protein is Mast cell protease 9 (Mcpt9) of Mus musculus (Mouse).